We begin with the raw amino-acid sequence, 296 residues long: NADPH-dependent 1-acyldihydroxyacetone phosphate reductase (296 aa).

Residue isoleucine 9 participates in NADP(+) binding. The GXSXG signature appears at 11 to 15; sequence GCSEG. 9 residues coordinate NADP(+): threonine 35, arginine 41, aspartate 56, asparagine 84, lysine 117, tyrosine 148, lysine 152, valine 181, and threonine 183. Tyrosine 148 (proton donor) is an active-site residue. Residue lysine 152 is the Lowers pKa of active site Tyr of the active site.

Belongs to the short-chain dehydrogenases/reductases (SDR) family.

Its subcellular location is the lipid droplet. It is found in the cytoplasm. It localises to the vacuole. The protein resides in the endoplasmic reticulum. The protein localises to the golgi apparatus. Its subcellular location is the mitochondrion outer membrane. It catalyses the reaction 1-hexadecanoyl-sn-glycero-3-phosphate + NADP(+) = 1-hexadecanoylglycerone 3-phosphate + NADPH + H(+). The catalysed reaction is a 1-acylglycerone 3-phosphate + NADPH + H(+) = a 1-acyl-sn-glycero-3-phosphate + NADP(+). The enzyme catalyses a triacylglycerol + H2O = a diacylglycerol + a fatty acid + H(+). In terms of biological role, can convert acyl and alkyl dihydroxyacetone-phosphate (DHAP) into glycerolipids and ether lipids, respectively. Required for the biosynthesis of phosphatidic acid via the DHAP pathway, where it reduces 1-acyl DHAP to lysophosphatidic acid (LPA). Also has triacylglycerol (TAG) lipase activity. Involved in the mobilization of the non-polar storage lipids triacylglycerols (TAGs) from lipid particles by hydrolysis of TAGs. Lipolysis of TAG by AYR1 is essential for starvation-induced autophagy. Forms an NADPH-regulated cation-selective channel in the mitochondrial outer membrane. The chain is NADPH-dependent 1-acyldihydroxyacetone phosphate reductase (ayr1) from Schizosaccharomyces pombe (strain 972 / ATCC 24843) (Fission yeast).